The following is a 725-amino-acid chain: ATP-dependent DNA helicase II subunit 2 (725 aa).

One can recognise a Ku domain in the interval 232-478 (LTLGDPQKYP…QQAMSDYVDA (247 aa)).

This sequence belongs to the ku80 family. In terms of assembly, heterodimer of mus-51/ku70 and mus-52/ku80.

The protein resides in the nucleus. It localises to the chromosome. It is found in the telomere. The enzyme catalyses ATP + H2O = ADP + phosphate + H(+). In terms of biological role, single-stranded DNA-dependent ATP-dependent helicase. Involved in non-homologous end joining (NHEJ) DNA double strand break repair. DNA-binding is sequence-independent but has a high affinity to nicks in double-stranded DNA and to the ends of duplex DNA. Binds to naturally occurring chromosomal ends, and therefore provides chromosomal end protection. Required also for telomere recombination to repair telomeric ends in the absence of telomerase. ku70, of the ku70/ku80 heterodimer, binds to the stem loop of tlc1, the RNA component of telomerase. Involved in telomere maintenance. Interacts with telomeric repeats and subtelomeric sequences thereby controlling telomere length and protecting against subtelomeric rearrangement. Maintains telomeric chromatin, which is involved in silencing the expression of genes located at the telomere. Required for mating-type switching. This chain is ATP-dependent DNA helicase II subunit 2 (mus-52), found in Neurospora crassa (strain ATCC 24698 / 74-OR23-1A / CBS 708.71 / DSM 1257 / FGSC 987).